Consider the following 417-residue polypeptide: Probable uracil permease (417 aa).

At 1–13 the chain is on the cytoplasmic side; sequence MTNQNPPVLLEQN. Residues 14 to 37 form a helical membrane-spanning segment; it reads HAKQAFVGLQMLFVAFGALVLVPL. The Periplasmic portion of the chain corresponds to 38–41; sequence ITGL. Residues 42–61 traverse the membrane as a helical segment; it reads NANTALLTAGIGTLLFQLCT. The Cytoplasmic segment spans residues 62-64; the sequence is GRQ. A discontinuously helical membrane pass occupies residues 65 to 81; it reads VPIFLASSFAFIAPIQY. F73 is a uracil binding site. Topologically, residues 83–90 are periplasmic; sequence VTTWGIAT. A helical transmembrane segment spans residues 91–111; the sequence is TMGGLVFTGLVYFALSTLVKI. Topologically, residues 112–123 are cytoplasmic; it reads KGAGALQKVFPP. The chain crosses the membrane as a helical span at residues 124-145; that stretch reads VVVGPVIIIIGMGLAPVAVDMA. The Periplasmic segment spans residues 146–154; the sequence is LGKNSTYQY. A helical membrane pass occupies residues 155–170; that stretch reads NDAVFVSMATLLTTLG. Residues 171-177 are Cytoplasmic-facing; that stretch reads VAVFAKG. Residues 178 to 198 form a helical membrane-spanning segment; sequence MMKLIPIMFGIVVGYILCLFL. Topologically, residues 199 to 223 are periplasmic; that stretch reads GLINFQPVIDAPWFSVPEITTPEFK. The helical transmembrane segment at 224–247 threads the bilayer; sequence LEAILYLLPIAIAPAVEHVGGIMA. E240 serves as a coordination point for uracil. At 248 to 260 the chain is on the cytoplasmic side; that stretch reads ISSVTGKDFLQKP. A helical membrane pass occupies residues 261-280; it reads GLHRTLLGDGIATSAASFLG. The chain crosses the membrane as a discontinuously helical span at residues 281–297; that stretch reads GPPNTTYAEVTGAVMLT. Residue E289 participates in uracil binding. Residues 298–300 are Cytoplasmic-facing; that stretch reads RNF. Residues 301–318 form a helical membrane-spanning segment; it reads NPKIMTWAAVWAIAISFC. Topologically, residues 319 to 331 are periplasmic; it reads GKVGAFLSTIPTI. A helical transmembrane segment spans residues 332–353; the sequence is VMGGIMMLVFGSIAVVGMSTLI. The Cytoplasmic portion of the chain corresponds to 354–364; sequence RGKVDVTEARN. The segment at residues 365–400 is an intramembrane region (discontinuously helical); the sequence is LCIISVVMTFGIGGMFVNFGEVSLKGISLCAVVAIL. Topologically, residues 401 to 416 are cytoplasmic; the sequence is LNLILPKAKNTPIEEN.

It belongs to the nucleobase:cation symporter-2 (NCS2) (TC 2.A.40) family.

It localises to the cell inner membrane. It carries out the reaction uracil(in) + H(+)(in) = uracil(out) + H(+)(out). Transport of uracil in the cell. This Pasteurella multocida (strain Pm70) protein is Probable uracil permease (uraA).